The primary structure comprises 1001 residues: MIQSSLYRALNKGFDYQILACKDFKESELAKEVISYFKPNIKAVLFPELRAKKNDDLRSFFEEFLQLLGGLREFYQALENKQETIIIAPISALLHPLPKKELLESFKITLLEKYNLKDLKDKLFYYGYEILDLVEVEGEASFRGDIVDIYIPNSKAYRLSFFDAECESIKELDPATQMSLKEDLLEIEIPPTLFSLDEPSYKDLKTKVEQSPLNSFSKDLTSFGLWFLGEKANDLLGVYQSIISPRALEEIQELASLNELDDERFKFLKVLENAQGYEDLEIHVHALEGFIALHSNRKITLLAPNKTILDNSISVLDAGNMECVIAPFVLNFKTPDRIFISLNSFERKKKRQKSKLALNELNAGEWVVHDDYGVGVFSQLIQHSVLGSKRDFLEIAYLGEDKLLLPVENLHLIARYVVQSDSVPVKDRLGKGSFLKLKAKVRAKLLEIAGKIIELAAERNLILGKKMDTHLAELEIFKSHAGFEYTSDQEKAIAEISRDLSSHRVMDRLLSGDVGFGKTEVAMHAIFCAFLNGFQSALVVPTTLLAHQHFETLKARFENFGVKVARLDRYIKTSEKSKLLKAVELGLVDVLIGTHAILGTKFKNLGLMVVDEEHKFGVKQKEALKELSKSVHFLSMSATPIPRTLNMALSQIKGISSLKTPPTDRKPSRTFLKEKNDELLKEIIYRELRRNGQIFYIHNHIASISKVKTKLEDLIPKLKIAILHSQINANESEEIMLEFAKGNYQVLLCTSIVESGIHLPNANTIIIDNAQNFGLADLHQLRGRVGRGKKEGFCYFLIEDQKSLNEQALKRLLALEKNSYLGSGESIAYHDLEIRGGGNLLGQDQSGHIKNIGYALYTRMLEDAIYELSGGKKRLEKSVEIQLGVSAFLNPELIASDSLRLDLYRRLSLCENVDEVGQIHEEIEDRFGKMDDLSAQFLQIITLKILANQLGILKLSNFNQNITLTYSDEKKESLKAPSKDDNDILETLLKHLHAQISLKRR.

A Helicase ATP-binding domain is found at Asp499–Leu658. Position 512-519 (Gly512–Thr519) interacts with ATP. Residues Asp611 to His614 carry the DEEH box motif. The region spanning Leu679–Arg835 is the Helicase C-terminal domain.

It in the N-terminal section; belongs to the UvrB family. In the C-terminal section; belongs to the helicase family. RecG subfamily.

Its subcellular location is the cytoplasm. Functionally, couples transcription and DNA repair by recognizing RNA polymerase (RNAP) stalled at DNA lesions. Mediates ATP-dependent release of RNAP and its truncated transcript from the DNA, and recruitment of nucleotide excision repair machinery to the damaged site. The chain is Transcription-repair-coupling factor from Helicobacter pylori (strain J99 / ATCC 700824) (Campylobacter pylori J99).